The primary structure comprises 155 residues: MDQAKLARMQQSVRIGGKGTPRRKVKKVHKSSGADDKKLQATLKKMNVQPIQAIEEVNMFKEDGNVIHFGAPKVHASVPSNTFALYGNGEEKELTELVPGILNQLGPDSLASLRKLAESYQNMQKNQAGADGKKDDEEDDIPDLVEGENFESNVE.

Disordered regions lie at residues 1-35 (MDQA…SGAD) and 116-155 (LAES…SNVE). A compositionally biased stretch (basic residues) spans 20–30 (TPRRKVKKVHK). The 66-residue stretch at 33-98 (GADDKKLQAT…GEEKELTELV (66 aa)) folds into the NAC-A/B domain. A compositionally biased stretch (acidic residues) spans 136–155 (DEEDDIPDLVEGENFESNVE).

This sequence belongs to the NAC-beta family. Part of the nascent polypeptide-associated complex (NAC), consisting of egd2 and egd1. NAC associates with ribosomes via egd1.

It localises to the cytoplasm. It is found in the nucleus. Component of the nascent polypeptide-associated complex (NAC), a dynamic component of the ribosomal exit tunnel, protecting the emerging polypeptides from interaction with other cytoplasmic proteins to ensure appropriate nascent protein targeting. The NAC complex also promotes mitochondrial protein import by enhancing productive ribosome interactions with the outer mitochondrial membrane and blocks the inappropriate interaction of ribosomes translating non-secretory nascent polypeptides with translocation sites in the membrane of the endoplasmic reticulum. EGD1 may act as a transcription factor that exert a negative effect on the expression of several genes that are transcribed by RNA polymerase II. The sequence is that of Nascent polypeptide-associated complex subunit beta (egd1) from Aspergillus niger (strain ATCC MYA-4892 / CBS 513.88 / FGSC A1513).